The sequence spans 316 residues: D-alanine--D-alanine ligase (316 aa).

Residues 112-310 (KTALKAHGLP…FGKLCRWLVE (199 aa)) enclose the ATP-grasp domain. 139–189 (MATPYVVKPNNEGSSVGVYLVNEAANGPPHLSDDMPDEVMVETYAPGRELT) provides a ligand contact to ATP. Residues D261, E277, and N279 each contribute to the Mg(2+) site.

It belongs to the D-alanine--D-alanine ligase family. Requires Mg(2+) as cofactor. Mn(2+) serves as cofactor.

The protein localises to the cytoplasm. It carries out the reaction 2 D-alanine + ATP = D-alanyl-D-alanine + ADP + phosphate + H(+). It functions in the pathway cell wall biogenesis; peptidoglycan biosynthesis. In terms of biological role, cell wall formation. In Jannaschia sp. (strain CCS1), this protein is D-alanine--D-alanine ligase.